The sequence spans 205 residues: Holliday junction branch migration complex subunit RuvA (205 aa).

The interval 1 to 64 (MIGKLKGIID…EDQIKLFGFR (64 aa)) is domain I. The domain II stretch occupies residues 65–143 (TDTEREWFRL…ALSAVDPAVV (79 aa)). The tract at residues 144-154 (KLSGAIDDNRA) is flexible linker. Residues 154–205 (APRAVTDAISALVNLGYGQPQAAAAVATASRTAGEDAETAQLIKLGLKELSK) form a domain III region.

The protein belongs to the RuvA family. As to quaternary structure, homotetramer. Forms an RuvA(8)-RuvB(12)-Holliday junction (HJ) complex. HJ DNA is sandwiched between 2 RuvA tetramers; dsDNA enters through RuvA and exits via RuvB. An RuvB hexamer assembles on each DNA strand where it exits the tetramer. Each RuvB hexamer is contacted by two RuvA subunits (via domain III) on 2 adjacent RuvB subunits; this complex drives branch migration. In the full resolvosome a probable DNA-RuvA(4)-RuvB(12)-RuvC(2) complex forms which resolves the HJ.

It localises to the cytoplasm. Functionally, the RuvA-RuvB-RuvC complex processes Holliday junction (HJ) DNA during genetic recombination and DNA repair, while the RuvA-RuvB complex plays an important role in the rescue of blocked DNA replication forks via replication fork reversal (RFR). RuvA specifically binds to HJ cruciform DNA, conferring on it an open structure. The RuvB hexamer acts as an ATP-dependent pump, pulling dsDNA into and through the RuvAB complex. HJ branch migration allows RuvC to scan DNA until it finds its consensus sequence, where it cleaves and resolves the cruciform DNA. The polypeptide is Holliday junction branch migration complex subunit RuvA (Rhodopseudomonas palustris (strain TIE-1)).